A 110-amino-acid chain; its full sequence is Mitochondrial pyruvate carrier 1 (110 aa).

The next 2 membrane-spanning stretches (helical) occupy residues 20-36 and 44-61; these read HFWG…AGLV and MISG…ALFM.

The protein belongs to the mitochondrial pyruvate carrier (MPC) (TC 2.A.105) family.

It is found in the mitochondrion inner membrane. In terms of biological role, mediates the uptake of pyruvate into mitochondria. This is Mitochondrial pyruvate carrier 1 from Arabidopsis thaliana (Mouse-ear cress).